The chain runs to 228 residues: Uracil-DNA glycosylase (228 aa).

Asp-64 (proton acceptor) is an active-site residue.

Belongs to the uracil-DNA glycosylase (UDG) superfamily. UNG family.

It is found in the cytoplasm. It carries out the reaction Hydrolyzes single-stranded DNA or mismatched double-stranded DNA and polynucleotides, releasing free uracil.. Functionally, excises uracil residues from the DNA which can arise as a result of misincorporation of dUMP residues by DNA polymerase or due to deamination of cytosine. The polypeptide is Uracil-DNA glycosylase (Yersinia pseudotuberculosis serotype O:1b (strain IP 31758)).